Here is a 430-residue protein sequence, read N- to C-terminus: Adenylosuccinate synthetase (430 aa).

GTP-binding positions include 12-18 (GDEGKGK) and 40-42 (GHT). D13 (proton acceptor) is an active-site residue. 2 residues coordinate Mg(2+): D13 and G40. IMP-binding positions include 13–16 (DEGK), 38–41 (NAGH), T128, R142, Q223, T238, and R302. H41 (proton donor) is an active-site residue. 298–304 (TTTGRPR) provides a ligand contact to substrate. GTP is bound by residues R304, 330 to 332 (SID), and 412 to 414 (SVG).

This sequence belongs to the adenylosuccinate synthetase family. In terms of assembly, homodimer. The cofactor is Mg(2+).

The protein localises to the cytoplasm. The enzyme catalyses IMP + L-aspartate + GTP = N(6)-(1,2-dicarboxyethyl)-AMP + GDP + phosphate + 2 H(+). The protein operates within purine metabolism; AMP biosynthesis via de novo pathway; AMP from IMP: step 1/2. Plays an important role in the de novo pathway of purine nucleotide biosynthesis. Catalyzes the first committed step in the biosynthesis of AMP from IMP. This Streptococcus pyogenes serotype M12 (strain MGAS9429) protein is Adenylosuccinate synthetase.